We begin with the raw amino-acid sequence, 145 residues long: Transcription antitermination protein NusB (145 aa).

Belongs to the NusB family.

Involved in transcription antitermination. Required for transcription of ribosomal RNA (rRNA) genes. Binds specifically to the boxA antiterminator sequence of the ribosomal RNA (rrn) operons. The chain is Transcription antitermination protein NusB from Geobacter sp. (strain M21).